Reading from the N-terminus, the 165-residue chain is UPF0262 protein blr1257 (165 aa).

Belongs to the UPF0262 family.

The protein is UPF0262 protein blr1257 of Bradyrhizobium diazoefficiens (strain JCM 10833 / BCRC 13528 / IAM 13628 / NBRC 14792 / USDA 110).